Reading from the N-terminus, the 760-residue chain is NAD(P)H-quinone oxidoreductase subunit 5, chloroplastic (760 aa).

The next 16 membrane-spanning stretches (helical) occupy residues 9–29, 39–59, 89–109, 125–145, 147–167, 185–205, 221–241, 260–280, 282–302, 329–349, 356–376, 398–418, 429–449, 556–576, 620–640, and 734–754; these read WIIS…LLLF, IWAF…IDLF, IDPL…LVLV, FVYM…SNLI, IYIF…FWFT, GDFG…SFEF, NEVH…GAIA, TPIS…FLVA, LLPL…IGII, LGYT…FHLI, ALLF…VGYS, IAFL…CFWS, YSPI…FYMF, ILFP…IGIP, FSVS…KPIY, and FYLL…SSIF.

This sequence belongs to the complex I subunit 5 family. As to quaternary structure, NDH is composed of at least 16 different subunits, 5 of which are encoded in the nucleus.

The protein localises to the plastid. The protein resides in the chloroplast thylakoid membrane. The catalysed reaction is a plastoquinone + NADH + (n+1) H(+)(in) = a plastoquinol + NAD(+) + n H(+)(out). It catalyses the reaction a plastoquinone + NADPH + (n+1) H(+)(in) = a plastoquinol + NADP(+) + n H(+)(out). Its function is as follows. NDH shuttles electrons from NAD(P)H:plastoquinone, via FMN and iron-sulfur (Fe-S) centers, to quinones in the photosynthetic chain and possibly in a chloroplast respiratory chain. The immediate electron acceptor for the enzyme in this species is believed to be plastoquinone. Couples the redox reaction to proton translocation, and thus conserves the redox energy in a proton gradient. This Populus trichocarpa (Western balsam poplar) protein is NAD(P)H-quinone oxidoreductase subunit 5, chloroplastic (ndhF).